We begin with the raw amino-acid sequence, 201 residues long: Recombination protein RecR (201 aa).

The segment at Cys-60 to Cys-75 adopts a C4-type zinc-finger fold. The Toprim domain occupies Ala-83 to Pro-178.

This sequence belongs to the RecR family.

In terms of biological role, may play a role in DNA repair. It seems to be involved in an RecBC-independent recombinational process of DNA repair. It may act with RecF and RecO. This Bartonella henselae (strain ATCC 49882 / DSM 28221 / CCUG 30454 / Houston 1) (Rochalimaea henselae) protein is Recombination protein RecR.